The sequence spans 901 residues: HTH-type transcriptional regulator MalT (901 aa).

An ATP-binding site is contributed by 39 to 46 (SPAGYGKT). The region spanning 829 to 894 (ELIRTSPLTQ…AAVQHAQKLL (66 aa)) is the HTH luxR-type domain. Residues 853-872 (NEQIAGELEVAATTIKTHIR) constitute a DNA-binding region (H-T-H motif).

The protein belongs to the MalT family. Monomer in solution. Oligomerizes to an active state in the presence of the positive effectors ATP and maltotriose.

Activated by ATP and maltotriose, which are both required for DNA binding. Functionally, positively regulates the transcription of the maltose regulon whose gene products are responsible for uptake and catabolism of malto-oligosaccharides. Specifically binds to the promoter region of its target genes, recognizing a short DNA motif called the MalT box. This is HTH-type transcriptional regulator MalT from Escherichia coli (strain 55989 / EAEC).